The sequence spans 561 residues: Urocanate hydratase (561 aa).

NAD(+) is bound by residues 52–53, Gln-130, 176–178, Glu-196, Arg-201, 242–243, 263–267, 273–274, and Tyr-322; these read GG, GMG, NA, QTSAH, and YL. The active site involves Cys-410. Residue Gly-492 coordinates NAD(+).

Belongs to the urocanase family. The cofactor is NAD(+).

It is found in the cytoplasm. It catalyses the reaction 4-imidazolone-5-propanoate = trans-urocanate + H2O. It participates in amino-acid degradation; L-histidine degradation into L-glutamate; N-formimidoyl-L-glutamate from L-histidine: step 2/3. Its function is as follows. Catalyzes the conversion of urocanate to 4-imidazolone-5-propionate. The protein is Urocanate hydratase of Salmonella gallinarum (strain 287/91 / NCTC 13346).